The primary structure comprises 85 residues: Serine protease inhibitor Cvsi-2 (85 aa).

A signal peptide spans 1–18 (MKVAVVVALLCFVCYTAA).

In terms of processing, contains 6 disulfide bonds. As to expression, detected in hemolymph (at protein level). Within the digestive gland expression is limited to the basophil cells of the digestive diverticula.

The protein localises to the secreted. Slow-binding inhibitor of serine proteases. The inhibitor rapidly binds to the protease forming a weak enzyme-inhibitor complex, and this is followed by a slow isomerization forming a tight-binding enzyme-inhibitor complex. Active against subtilisin A with a dissociation constant of 0.18 nM. Active against perkinsin. Not active against thermolysin, papain or pepsin. The protein is Serine protease inhibitor Cvsi-2 of Crassostrea virginica (Eastern oyster).